Reading from the N-terminus, the 144-residue chain is uncharacterized protein (144 aa).

The interval 90-144 is disordered; the sequence is KKEYSALKKSGKIHKVGGSKSSGHRKTKKPKKSMKGGSKTKKLSEKQLMKELLAM. Over residues 98-130 the composition is skewed to basic residues; it reads KSGKIHKVGGSKSSGHRKTKKPKKSMKGGSKTK.

This is an uncharacterized protein from Sputnik virophage.